A 513-amino-acid polypeptide reads, in one-letter code: Melianol synthase CYP71BQ4 (513 aa).

A helical membrane pass occupies residues M10–I30. Heme is bound at residue C451.

The protein belongs to the cytochrome P450 family. Requires heme as cofactor. Accumulates in mature fruits and in juice vesicles.

The protein resides in the membrane. It carries out the reaction dihydroniloticin + 2 reduced [NADPH--hemoprotein reductase] + 2 O2 = melianol + 2 oxidized [NADPH--hemoprotein reductase] + 3 H2O + 2 H(+). Its pathway is secondary metabolite biosynthesis; terpenoid biosynthesis. Its function is as follows. Monooxygenase involved in the biosynthesis of limonoids triterpene natural products such as limonin, a compound with insecticidal activity responsible for the bitter taste in citrus. Catalyzes the conversion of dihydroniloticin to the protolimonoid melianol. The protein is Melianol synthase CYP71BQ4 of Citrus sinensis (Sweet orange).